We begin with the raw amino-acid sequence, 436 residues long: Citrate synthase (436 aa).

Active-site residues include histidine 311 and aspartate 370.

It belongs to the citrate synthase family. As to quaternary structure, homohexamer.

It carries out the reaction oxaloacetate + acetyl-CoA + H2O = citrate + CoA + H(+). The protein operates within carbohydrate metabolism; tricarboxylic acid cycle; isocitrate from oxaloacetate: step 1/2. With respect to regulation, allosterically inhibited by NADH. This chain is Citrate synthase (gltA), found in Rickettsia prowazekii (strain Madrid E).